The primary structure comprises 173 residues: Shikimate kinase 1 (173 aa).

Residue 14–19 participates in ATP binding; it reads GAGKST. S18 serves as a coordination point for Mg(2+). Substrate is bound by residues D36, R60, and G82. Residue R120 coordinates ATP. R140 contributes to the substrate binding site. ATP is bound at residue Q157.

The protein belongs to the shikimate kinase family. In terms of assembly, monomer. Requires Mg(2+) as cofactor.

It is found in the cytoplasm. The catalysed reaction is shikimate + ATP = 3-phosphoshikimate + ADP + H(+). Its pathway is metabolic intermediate biosynthesis; chorismate biosynthesis; chorismate from D-erythrose 4-phosphate and phosphoenolpyruvate: step 5/7. Functionally, catalyzes the specific phosphorylation of the 3-hydroxyl group of shikimic acid using ATP as a cosubstrate. In Yersinia pseudotuberculosis serotype O:1b (strain IP 31758), this protein is Shikimate kinase 1.